Consider the following 364-residue polypeptide: Lipid-A-disaccharide synthase (364 aa).

Belongs to the LpxB family.

The enzyme catalyses a lipid X + a UDP-2-N,3-O-bis[(3R)-3-hydroxyacyl]-alpha-D-glucosamine = a lipid A disaccharide + UDP + H(+). Its pathway is bacterial outer membrane biogenesis; LPS lipid A biosynthesis. Condensation of UDP-2,3-diacylglucosamine and 2,3-diacylglucosamine-1-phosphate to form lipid A disaccharide, a precursor of lipid A, a phosphorylated glycolipid that anchors the lipopolysaccharide to the outer membrane of the cell. The polypeptide is Lipid-A-disaccharide synthase (Campylobacter jejuni (strain RM1221)).